Reading from the N-terminus, the 445-residue chain is Histidinol dehydrogenase (445 aa).

3 residues coordinate NAD(+): Tyr-138, Gln-199, and Asn-222. 3 residues coordinate substrate: Ser-245, Gln-267, and His-270. 2 residues coordinate Zn(2+): Gln-267 and His-270. Active-site proton acceptor residues include Glu-335 and His-336. 4 residues coordinate substrate: His-336, Asp-369, Glu-423, and His-428. Asp-369 is a Zn(2+) binding site. His-428 provides a ligand contact to Zn(2+).

This sequence belongs to the histidinol dehydrogenase family. It depends on Zn(2+) as a cofactor.

The catalysed reaction is L-histidinol + 2 NAD(+) + H2O = L-histidine + 2 NADH + 3 H(+). It functions in the pathway amino-acid biosynthesis; L-histidine biosynthesis; L-histidine from 5-phospho-alpha-D-ribose 1-diphosphate: step 9/9. In terms of biological role, catalyzes the sequential NAD-dependent oxidations of L-histidinol to L-histidinaldehyde and then to L-histidine. This is Histidinol dehydrogenase from Burkholderia mallei (strain ATCC 23344).